The chain runs to 419 residues: eIF5-mimic protein 1 (419 aa).

Positions 1 to 22 (MNKHQKPVLTGQRFKTRKRDEK) are disordered. K117 carries the post-translational modification N6-acetyllysine. Positions 248-415 (VQQSLGTRKE…QNAEEESESE (168 aa)) constitute a W2 domain. 2 positions are modified to phosphoserine: S412 and S414.

This sequence belongs to the BZW family. In terms of assembly, interacts with EIF3E. Interacts with EIF2S2. Interacts with EIF3C.

The protein localises to the cytoplasm. In terms of biological role, translation initiation regulator which represses non-AUG initiated translation and repeat-associated non-AUG (RAN) initiated translation by acting as a competitive inhibitor of eukaryotic translation initiation factor 5 (EIF5) function. Increases the accuracy of translation initiation by impeding EIF5-dependent translation from non-AUG codons by competing with it for interaction with EIF2S2 within the 43S pre-initiation complex (PIC) in an EIF3C-binding dependent manner. The chain is eIF5-mimic protein 1 (BZW2) from Homo sapiens (Human).